The following is a 404-amino-acid chain: MHC class I-like protein MILL1 (404 aa).

A signal peptide spans 1 to 30; that stretch reads MMLSRDLRAEAAVRLWIMFLLLEDLLGACA. The interval 59-150 is alpha-1; the sequence is EVAGPHTLRY…VTGQKGQDKG (92 aa). N-linked (GlcNAc...) asparagine glycosylation is found at Asn98, Asn102, and Asn165. Residues 151–242 form an alpha-2 region; the sequence is LHILQATLGC…SLRSEPLDTG (92 aa). Intrachain disulfides connect Cys160–Cys223 and Cys262–Cys322. The 115-residue stretch at 224–338 folds into the Ig-like C1-type domain; it reads PAQLQRHLAS…GNIEKRAVIV (115 aa). An alpha-3 region spans residues 243 to 342; that stretch reads SPMVIVTFRN…KRAVIVNTVS (100 aa). A glycan (N-linked (GlcNAc...) asparagine) is linked at Asn323. The interval 343 to 373 is connecting peptide; sequence GEKTRQPSTSGVGGRVKKSLWTTMTTAFMVT. A lipid anchor (GPI-anchor amidated serine) is attached at Ser374. A propeptide spans 375–404 (removed in mature form); that stretch reads WTRKTGGDSTLLLLWWLLFFSTVLAVLTLV.

It belongs to the MHC class I family. As to quaternary structure, heterodimer with B2M. In terms of tissue distribution, detected in skin, esophagus, tongue, skin, muscle, uterus, ovary, testis and epididymis.

The protein resides in the cell membrane. In Rattus norvegicus (Rat), this protein is MHC class I-like protein MILL1.